A 292-amino-acid polypeptide reads, in one-letter code: Small ribosomal subunit biogenesis GTPase RsgA (292 aa).

The region spanning 64-221 (RSELFRPAVA…LVDTPGFSSL (158 aa)) is the CP-type G domain. GTP contacts are provided by residues 113-116 (NKMD) and 164-172 (GPSGVGKST). Zn(2+) is bound by residues Cys245, Cys250, His252, and Cys258.

It belongs to the TRAFAC class YlqF/YawG GTPase family. RsgA subfamily. As to quaternary structure, monomer. Associates with 30S ribosomal subunit, binds 16S rRNA. It depends on Zn(2+) as a cofactor.

It is found in the cytoplasm. In terms of biological role, one of several proteins that assist in the late maturation steps of the functional core of the 30S ribosomal subunit. Helps release RbfA from mature subunits. May play a role in the assembly of ribosomal proteins into the subunit. Circularly permuted GTPase that catalyzes slow GTP hydrolysis, GTPase activity is stimulated by the 30S ribosomal subunit. This is Small ribosomal subunit biogenesis GTPase RsgA from Clostridium botulinum (strain Kyoto / Type A2).